The sequence spans 467 residues: Asparagine--tRNA ligase (467 aa).

Belongs to the class-II aminoacyl-tRNA synthetase family. As to quaternary structure, homodimer.

The protein resides in the cytoplasm. The enzyme catalyses tRNA(Asn) + L-asparagine + ATP = L-asparaginyl-tRNA(Asn) + AMP + diphosphate + H(+). This Protochlamydia amoebophila (strain UWE25) protein is Asparagine--tRNA ligase.